The sequence spans 202 residues: Probable septum site-determining protein MinC (202 aa).

It belongs to the MinC family. As to quaternary structure, interacts with MinD and FtsZ.

Cell division inhibitor that blocks the formation of polar Z ring septums. Rapidly oscillates between the poles of the cell to destabilize FtsZ filaments that have formed before they mature into polar Z rings. Prevents FtsZ polymerization. This chain is Probable septum site-determining protein MinC, found in Sulfurihydrogenibium sp. (strain YO3AOP1).